Consider the following 266-residue polypeptide: Dihydropteroate synthase (266 aa).

One can recognise a Pterin-binding domain in the interval 12–260 (AAIMGILNVT…DVKANQEIVA (249 aa)). Residue Asn-19 coordinates Mg(2+). Residues Thr-59, Asp-93, Asn-112, Asp-176, Lys-212, and 248–250 (RVH) each bind (7,8-dihydropterin-6-yl)methyl diphosphate.

The protein belongs to the DHPS family. Homodimer or homotrimer. Mg(2+) serves as cofactor.

The catalysed reaction is (7,8-dihydropterin-6-yl)methyl diphosphate + 4-aminobenzoate = 7,8-dihydropteroate + diphosphate. It functions in the pathway cofactor biosynthesis; tetrahydrofolate biosynthesis; 7,8-dihydrofolate from 2-amino-4-hydroxy-6-hydroxymethyl-7,8-dihydropteridine diphosphate and 4-aminobenzoate: step 1/2. Functionally, catalyzes the condensation of para-aminobenzoate (pABA) with 6-hydroxymethyl-7,8-dihydropterin diphosphate (DHPt-PP) to form 7,8-dihydropteroate (H2Pte), the immediate precursor of folate derivatives. The protein is Dihydropteroate synthase (folP) of Streptococcus pyogenes.